A 747-amino-acid chain; its full sequence is Polyribonucleotide nucleotidyltransferase (747 aa).

Mg(2+)-binding residues include Asp487 and Asp493. The 60-residue stretch at 554–613 folds into the KH domain; sequence PSTTTIKIDKDKIRDVIGPGGKVIKEICETSDAKIDISDDGTVSVYASDRDKLKVALDKI. Positions 623–691 constitute an S1 motif domain; it reads GEIFNGTVMK…NKGKAKLTIK (69 aa). The disordered stretch occupies residues 691-747; the sequence is KNADKDKSSNNPKQKNNVNNSKENSEPERRDSSKKRAWNEDNNSDTTEVITERKYFN. Positions 699-712 are enriched in low complexity; that stretch reads SNNPKQKNNVNNSK. The segment covering 730–739 has biased composition (polar residues); the sequence is EDNNSDTTEV.

It belongs to the polyribonucleotide nucleotidyltransferase family. The cofactor is Mg(2+).

It is found in the cytoplasm. It catalyses the reaction RNA(n+1) + phosphate = RNA(n) + a ribonucleoside 5'-diphosphate. Involved in mRNA degradation. Catalyzes the phosphorolysis of single-stranded polyribonucleotides processively in the 3'- to 5'-direction. The polypeptide is Polyribonucleotide nucleotidyltransferase (Rickettsia akari (strain Hartford)).